Consider the following 372-residue polypeptide: Heat-inducible transcription repressor HrcA (372 aa).

Positions tyrosine 300–isoleucine 334 are disordered.

This sequence belongs to the HrcA family.

Functionally, negative regulator of class I heat shock genes (grpE-dnaK-dnaJ and groELS operons). Prevents heat-shock induction of these operons. This chain is Heat-inducible transcription repressor HrcA, found in Bifidobacterium longum (strain DJO10A).